The primary structure comprises 383 residues: Microtubule-associated protein tau (383 aa).

Positions 1-27 are enriched in basic and acidic residues; the sequence is MAEPRQEFDVMEDHAGTYGLGDRKDQE. The tract at residues 1–198 is disordered; it reads MAEPRQEFDV…PVPMPDLKNV (198 aa). N-acetylalanine is present on A2. Y18 and Y29 each carry phosphotyrosine. K44 participates in a covalent cross-link: Glycyl lysine isopeptide (Lys-Gly) (interchain with G-Cter in ubiquitin). T53 is subject to Phosphothreonine. The span at 72-91 shows a compositional bias: basic and acidic residues; sequence KSKDGTGSDDKKAKGADGKT. T95 bears the Phosphothreonine mark. At R97 the chain carries Omega-N-methylarginine. Residue K105 is modified to N6,N6-dimethyllysine; alternate. The residue at position 105 (K105) is an N6-acetyllysine; alternate. Phosphothreonine is present on residues T111, T117, and T123. Positions 116-128 are enriched in pro residues; it reads KTPPAPKTPPSSG. Phosphoserine occurs at positions 127, 133, and 137. Positions 129–156 are enriched in low complexity; sequence EPPKSGDRSGYSSPGSPGTPGSRSRTPS. Y139 carries the phosphotyrosine modification. Residues S140, S141, and S144 each carry the phosphoserine modification. Residues T147 and T154 each carry the phosphothreonine modification. Position 156 is a phosphoserine (S156). T159 carries the phosphothreonine modification. N6-acetyllysine is present on K167. A Phosphothreonine modification is found at T173. 2 positions are modified to phosphoserine: S177 and S179. 4 Tau/MAP repeats span residues 186 to 216, 217 to 247, 248 to 278, and 279 to 310; these read QTAP…GGGK, VQII…GGGS, VQIV…GGGQ, and VEVK…GGGN. K196 is covalently cross-linked (Glycyl lysine isopeptide (Lys-Gly) (interchain with G-Cter in ubiquitin)). Position 201 is an N6-acetyllysine; alternate (K201). Position 201 is an N6-methyllysine; alternate (K201). K201 participates in a covalent cross-link: Glycyl lysine isopeptide (Lys-Gly) (interchain with G-Cter in ubiquitin); alternate. At S204 the chain carries Phosphoserine. A Glycyl lysine isopeptide (Lys-Gly) (interchain with G-Cter in ubiquitin) cross-link involves residue K209. Position 223 is an N6-acetyllysine; alternate (K223). A Glycyl lysine isopeptide (Lys-Gly) (interchain with G-Cter in ubiquitin); alternate cross-link involves residue K223. S227 and S231 each carry phosphoserine. K232 bears the N6-acetyllysine mark. C233 and C264 form a disulfide bridge. At S235 the chain carries Phosphoserine. K240 carries the N6-acetyllysine; alternate modification. Residue K240 forms a Glycyl lysine isopeptide (Lys-Gly) (interchain with G-Cter in ubiquitin); alternate linkage. Position 247 is a phosphoserine (S247). K253 bears the N6,N6-dimethyllysine; alternate mark. 3 positions are modified to N6-acetyllysine; alternate: K253, K259, and K263. Residues K253, K259, and K263 each participate in a glycyl lysine isopeptide (Lys-Gly) (interchain with G-Cter in ubiquitin); alternate cross-link. A Phosphoserine modification is found at S266. An N6-acetyllysine; alternate mark is found at K273, K285, and K289. Glycyl lysine isopeptide (Lys-Gly) (interchain with G-Cter in ubiquitin); alternate cross-links involve residues K273, K285, and K289. At R291 the chain carries Omega-N-methylarginine. Residue S294 is modified to Phosphoserine. Residue K295 forms a Glycyl lysine isopeptide (Lys-Gly) (interchain with G-Cter in ubiquitin) linkage. S298 carries the phosphoserine modification. Residue K311 is modified to N6-acetyllysine; alternate. A Glycyl lysine isopeptide (Lys-Gly) (interchain with G-Cter in ubiquitin); alternate cross-link involves residue K311. Residue K317 forms a Glycyl lysine isopeptide (Lys-Gly) (interchain with G-Cter in ubiquitin) linkage. K327 carries the N6-acetyllysine; alternate modification. K327 participates in a covalent cross-link: Glycyl lysine isopeptide (Lys-Gly) (interchain with G-Cter in ubiquitin); alternate. The residue at position 336 (Y336) is a Phosphotyrosine. S338 and S342 each carry phosphoserine. The disordered stretch occupies residues 340–359; sequence VVSGDTSPRHLSNVSSTGSI. The segment covering 343–358 has biased composition (polar residues); that stretch reads GDTSPRHLSNVSSTGS. T345 bears the Phosphothreonine mark. S346, S351, S358, and S364 each carry phosphoserine. Residue T369 is modified to Phosphothreonine.

As to quaternary structure, interacts with MARK1, MARK2, MARK3 and MARK4. Interacts with SQSTM1 when polyubiquitinated. Interacts with PSMC2 through SQSTM1. Interacts with FKBP4. Binds to CSNK1D. Interacts with SGK1. Interacts with PIN1. Interacts with LRRK2. Interacts with LRP1, leading to endocytosis; this interaction is reduced in the presence of LRPAP1/RAP. Post-translationally, polyubiquitinated. Requires functional TRAF6 and may provoke SQSTM1-dependent degradation by the proteasome. In terms of processing, phosphorylation at various serine and threonine residues in S-P or T-P motifs by proline-directed protein kinases (PDPK1, CDK1, CDK5, GSK3, MAPK) (a few sites per protein in interphase, more in mitosis), and at serine residues in K-X-G-S motifs by MAP/microtubule affinity-regulating kinase (MARK1, MARK2, MARK3 or MARK4), causing detachment from microtubules, and their disassembly. Phosphorylation at Ser-204 by BRSK1 and BRSK2 in neurons affects ability to bind microtubules and plays a role in neuron polarization. Phosphorylated by PHK. Dephosphorylation at several serine and threonine residues by the serine/threonine phosphatase PPP5C. Expressed in neurons.

It is found in the cytoplasm. It localises to the cytosol. Its subcellular location is the cell membrane. The protein resides in the cytoskeleton. The protein localises to the cell projection. It is found in the axon. It localises to the dendrite. Promotes microtubule assembly and stability, and might be involved in the establishment and maintenance of neuronal polarity. The C-terminus binds axonal microtubules while the N-terminus binds neural plasma membrane components, suggesting that tau functions as a linker protein between both. Axonal polarity is predetermined by tau localization (in the neuronal cell) in the domain of the cell body defined by the centrosome. The polypeptide is Microtubule-associated protein tau (MAPT) (Papio hamadryas (Hamadryas baboon)).